We begin with the raw amino-acid sequence, 212 residues long: N-(5'-phosphoribosyl)anthranilate isomerase (212 aa).

It belongs to the TrpF family.

It catalyses the reaction N-(5-phospho-beta-D-ribosyl)anthranilate = 1-(2-carboxyphenylamino)-1-deoxy-D-ribulose 5-phosphate. It functions in the pathway amino-acid biosynthesis; L-tryptophan biosynthesis; L-tryptophan from chorismate: step 3/5. In Cereibacter sphaeroides (strain ATCC 17029 / ATH 2.4.9) (Rhodobacter sphaeroides), this protein is N-(5'-phosphoribosyl)anthranilate isomerase.